The chain runs to 520 residues: Cytochrome P450 monooxygenase 176 (520 aa).

Asn-6 carries an N-linked (GlcNAc...) asparagine glycan. A helical membrane pass occupies residues 10–27; it reads LLVVAGALFLTFLTTRFI. N-linked (GlcNAc...) asparagine glycans are attached at residues Asn-141 and Asn-270. A heme-binding site is contributed by Cys-445. Residue Asn-517 is glycosylated (N-linked (GlcNAc...) asparagine).

This sequence belongs to the cytochrome P450 family. Requires heme as cofactor.

It localises to the membrane. The protein operates within secondary metabolite biosynthesis. Its function is as follows. Cytochrome P450 monooxygenase that is able to use delta(6)-protoilludene as a substrate to produce delta(6)-protoilludene-5-ol and an unidentified hydroxyprotoilludene. Is also able to use phenanthrene as a substrate for oxidation. This Postia placenta (strain ATCC 44394 / Madison 698-R) (Brown rot fungus) protein is Cytochrome P450 monooxygenase 176.